The sequence spans 364 residues: Oxidized polyvinyl alcohol hydrolase (364 aa).

A signal peptide spans 1 to 34 (MFKPVVKSRSSRSFCYLAGCLAMVAATLSSTAQA). Residues S190 and S293 each act as charge relay system in the active site.

The protein belongs to the peptidase S9A family. Monomer.

It is found in the periplasm. The enzyme catalyses nonane-4,6-dione + H2O = pentan-2-one + butanoate + H(+). Catalyzes the hydrolysis of 4,6-nonanedione, a beta-diketone compound. Also mediates hydrolysis of oxidized polyvinyl alcohol (PVA) in the second step in the degradation of polyvinyl alcohol. Not active toward the monoketone structure. The polypeptide is Oxidized polyvinyl alcohol hydrolase (oph) (Sphingopyxis sp. (strain 113P3)).